The sequence spans 107 residues: Ig kappa chain V-VI region NQ2-48.2.2 (107 aa).

Residues 1–23 form a framework-1 region; sequence QILLTQSPAIMSASPGQKVTMTC. A disulfide bond links Cys-23 and Cys-87. The interval 24-33 is complementarity-determining-1; sequence SASSSVSYMH. The tract at residues 34–48 is framework-2; it reads WYQQKSGTSPKRWIY. The interval 49–55 is complementarity-determining-2; that stretch reads DTSKLAS. A framework-3 region spans residues 56-87; the sequence is GVPARFSGSGSATSYSLTITSMQAEDAATYYC. The tract at residues 88-96 is complementarity-determining-3; that stretch reads QQWSSNPLT. The interval 97-106 is framework-4; sequence FGAGTKLXLK.

In terms of biological role, anti-2-phenyl oxazolone (PHOX) Antibody. This chain is Ig kappa chain V-VI region NQ2-48.2.2, found in Mus musculus (Mouse).